The primary structure comprises 161 residues: Troponin C, slow skeletal and cardiac muscles (161 aa).

An N-acetylmethionine modification is found at Met-1. EF-hand domains are found at residues 16 to 51 (QKNE…LGQN), 52 to 87 (PTPE…CMKD), 92 to 127 (KTEE…TGET), and 128 to 161 (ITED…KGVE). Residues Asp-65, Asp-67, Ser-69, Thr-71, Glu-76, Asp-105, Asn-107, Asp-109, Tyr-111, Glu-116, Asp-141, Asn-143, Asp-145, Arg-147, and Glu-152 each contribute to the Ca(2+) site.

It belongs to the troponin C family.

Its function is as follows. Troponin is the central regulatory protein of striated muscle contraction. Tn consists of three components: Tn-I which is the inhibitor of actomyosin ATPase, Tn-T which contains the binding site for tropomyosin and Tn-C. The binding of calcium to Tn-C abolishes the inhibitory action of Tn on actin filaments. The chain is Troponin C, slow skeletal and cardiac muscles (TNNC1) from Gallus gallus (Chicken).